Reading from the N-terminus, the 72-residue chain is Keratin-associated protein 19-5 (72 aa).

This sequence belongs to the KRTAP type 19 family. As to quaternary structure, interacts with hair keratins.

Functionally, in the hair cortex, hair keratin intermediate filaments are embedded in an interfilamentous matrix, consisting of hair keratin-associated proteins (KRTAP), which are essential for the formation of a rigid and resistant hair shaft through their extensive disulfide bond cross-linking with abundant cysteine residues of hair keratins. The matrix proteins include the high-sulfur and high-glycine-tyrosine keratins. This chain is Keratin-associated protein 19-5 (KRTAP19-5), found in Homo sapiens (Human).